Here is a 92-residue protein sequence, read N- to C-terminus: Small ribosomal subunit protein uS19 (92 aa).

Belongs to the universal ribosomal protein uS19 family.

In terms of biological role, protein S19 forms a complex with S13 that binds strongly to the 16S ribosomal RNA. The polypeptide is Small ribosomal subunit protein uS19 (rpsS) (Synechocystis sp. (strain ATCC 27184 / PCC 6803 / Kazusa)).